We begin with the raw amino-acid sequence, 270 residues long: Protein-ADP-ribose hydrolase (270 aa).

Residues 73-267 enclose the Macro domain; that stretch reads VSVKDCQKTN…LYDTYLQKEN (195 aa). ADP-D-ribose contacts are provided by Asp-92, Ile-93, and Asn-106. Positions 112, 117, and 119 each coordinate Zn(2+). Cys-119, Ile-120, Asp-121, Ser-212, Thr-213, Gly-214, Glu-215, and Phe-216 together coordinate ADP-D-ribose.

It belongs to the MacroD-type family. Zn-Macro subfamily. Requires Zn(2+) as cofactor.

The catalysed reaction is 4-O-(ADP-D-ribosyl)-L-aspartyl-[protein] + H2O = L-aspartyl-[protein] + ADP-D-ribose + H(+). In terms of biological role, ADP-ribosylhydrolase that specifically reverses the SirTM-mediated mono-ADP-ribosylation at an asparatate residue of GcvH-L, by releasing ADP-ribose from the target protein. May play a role in the regulation of the response to host-induced oxidative stress. The chain is Protein-ADP-ribose hydrolase from Streptococcus pyogenes serotype M6 (strain ATCC BAA-946 / MGAS10394).